A 575-amino-acid chain; its full sequence is Delta-selinene-like synthase, chloroplastic (575 aa).

(2E,6E)-farnesyl diphosphate contacts are provided by Arg288, Asp325, Asp329, Arg466, and Asp469. Positions 325 and 329 each coordinate Mg(2+). A DDXXD motif motif is present at residues 325–329 (DDLYD). Mg(2+) contacts are provided by Asp469 and Glu477.

Belongs to the terpene synthase family. Tpsb subfamily. In terms of assembly, monomer. Requires Mg(2+) as cofactor. The cofactor is Mn(2+).

The protein localises to the plastid. It is found in the chloroplast. It catalyses the reaction (2E,6E)-farnesyl diphosphate = (+)-delta-selinene + diphosphate. It participates in secondary metabolite biosynthesis; terpenoid biosynthesis. The protein operates within terpene metabolism; oleoresin biosynthesis. In terms of biological role, sesquiterpene synthase (sesqui-TPS) involved in the biosynthesis of sesquiterpene natural products. Catalyzes the conversion of (2E)-geranyl diphosphate (GPP) into delta-selinene. This is Delta-selinene-like synthase, chloroplastic from Picea sitchensis (Sitka spruce).